The chain runs to 495 residues: 2-carboxy-D-arabinitol-1-phosphatase (495 aa).

Over residues 1–12 (MLLFAPTPPPSP) the composition is skewed to pro residues. A disordered region spans residues 1–23 (MLLFAPTPPPSPATAHRRPGGSA). The transit peptide at 1–50 (MLLFAPTPPPSPATAHRRPGGSAASCIRCSSVRELDRSPSRPPLPPLAEA) directs the protein to the chloroplast. The Tele-phosphohistidine intermediate role is filled by His-58. Catalysis depends on Glu-132, which acts as the Proton donor/acceptor.

Belongs to the phosphoglycerate mutase family.

It is found in the plastid. The protein localises to the chloroplast stroma. The enzyme catalyses 2-carboxy-D-arabinitol 1-phosphate + H2O = 2-carboxy-D-arabinitol + phosphate. Its activity is regulated as follows. Inactivated by oxidized glutathione (GSSG) at pH 8.0. Phosphoglycerate mutase-like protein lacking PGM activity, but having 2-carboxy-D-arabinitol 1-phosphate (CA1P) phosphatase activity. Can dephosphorylate the closely related compounds 2-carboxy-D-arabinitol 1,5-bisphosphate (CABP) and 2-carboxy-D-ribitol-1,5-bisphosphate(CRBP), and 2,3-diphosphoglycerate. Prevents the accumulation of D-glycero-2,3-pentodiulose-1,5-bisphosphate (PDBP) a potent inhibitor of ribulose-1,5-bisphosphate carboxylase (RuBisCO). PDBP is produced during the oxidation of ribulose-1,5-bisphosphate, the substrate of RuBisCO. The sequence is that of 2-carboxy-D-arabinitol-1-phosphatase from Triticum aestivum (Wheat).